Reading from the N-terminus, the 286-residue chain is Pantothenate synthetase (286 aa).

32 to 39 provides a ligand contact to ATP; the sequence is MGALHEGH. Residue histidine 39 is the Proton donor of the active site. Residue glutamine 63 coordinates (R)-pantoate. A beta-alanine-binding site is contributed by glutamine 63. 149–152 contributes to the ATP binding site; that stretch reads GEKD. Position 155 (glutamine 155) interacts with (R)-pantoate. ATP is bound by residues leucine 178 and 186-189; that span reads SSSR.

It belongs to the pantothenate synthetase family. As to quaternary structure, homodimer.

It localises to the cytoplasm. The catalysed reaction is (R)-pantoate + beta-alanine + ATP = (R)-pantothenate + AMP + diphosphate + H(+). It participates in cofactor biosynthesis; (R)-pantothenate biosynthesis; (R)-pantothenate from (R)-pantoate and beta-alanine: step 1/1. Its function is as follows. Catalyzes the condensation of pantoate with beta-alanine in an ATP-dependent reaction via a pantoyl-adenylate intermediate. In Bartonella quintana (strain Toulouse) (Rochalimaea quintana), this protein is Pantothenate synthetase.